The chain runs to 137 residues: Small ribosomal subunit protein uS9 (137 aa).

A disordered region spans residues 118 to 137; that stretch reads KERKKYGLRKARKAPQYSKR.

This sequence belongs to the universal ribosomal protein uS9 family.

The protein is Small ribosomal subunit protein uS9 of Acaryochloris marina (strain MBIC 11017).